A 1040-amino-acid polypeptide reads, in one-letter code: Multidrug resistance protein MdtB (1040 aa).

12 consecutive transmembrane segments (helical) span residues 25–45 (LLMAAMLLAGIIGYRFLPVAA), 347–367 (LMLAIALVVMIIYLFLRNIPA), 369–389 (IIPGVAVPLSLIGTFAVMVFL), 396–416 (LTLMALTIATGFVVDDAIVVI), 440–460 (IGFTIISLTFSLIAVLIPLLF), 472–492 (FAVTLAVAILISAVVSLTLTP), 537–557 (WLTLSVAFATLLLSVMLWIVI), 869–889 (LIVAAVVAMYIVLGVLYESFI), 890–910 (HPITILSTLPTAGVGALLALM), 911–931 (IAGSELDIIAIIGIILLIGIV), 968–988 (ILMTTLAALLGALPLMLSTGV), and 998–1018 (IAMVGGLLVSQILTLFTTPVI).

The protein belongs to the resistance-nodulation-cell division (RND) (TC 2.A.6) family. MdtB subfamily. In terms of assembly, part of a tripartite efflux system composed of MdtA, MdtB and MdtC. MdtB forms a heteromultimer with MdtC.

It localises to the cell inner membrane. In Salmonella arizonae (strain ATCC BAA-731 / CDC346-86 / RSK2980), this protein is Multidrug resistance protein MdtB.